The sequence spans 314 residues: Jacalin-related lectin 9 (314 aa).

Residues methionine 1 to alanine 23 form the signal peptide. 2 consecutive Jacalin-type lectin domains span residues glutamine 24 to lysine 165 and proline 168 to proline 313.

Belongs to the jacalin lectin family.

This Arabidopsis thaliana (Mouse-ear cress) protein is Jacalin-related lectin 9 (JAL9).